The following is a 312-amino-acid chain: Methionyl-tRNA formyltransferase (312 aa).

109–112 (SLLP) contributes to the (6S)-5,6,7,8-tetrahydrofolate binding site.

This sequence belongs to the Fmt family.

It catalyses the reaction L-methionyl-tRNA(fMet) + (6R)-10-formyltetrahydrofolate = N-formyl-L-methionyl-tRNA(fMet) + (6S)-5,6,7,8-tetrahydrofolate + H(+). In terms of biological role, attaches a formyl group to the free amino group of methionyl-tRNA(fMet). The formyl group appears to play a dual role in the initiator identity of N-formylmethionyl-tRNA by promoting its recognition by IF2 and preventing the misappropriation of this tRNA by the elongation apparatus. The protein is Methionyl-tRNA formyltransferase of Listeria monocytogenes serovar 1/2a (strain ATCC BAA-679 / EGD-e).